Consider the following 122-residue polypeptide: Large ribosomal subunit protein uL14c (122 aa).

The protein belongs to the universal ribosomal protein uL14 family. Part of the 50S ribosomal subunit.

It localises to the plastid. Its subcellular location is the chloroplast. Binds to 23S rRNA. The sequence is that of Large ribosomal subunit protein uL14c (rpl14) from Bigelowiella natans (Pedinomonas minutissima).